The following is an 82-amino-acid chain: MGFGGISLWQLLIVLAIIVLLFGTKKLRGIGGDLGGAVKGFKKAMSDEKNTDKEKPEQIQKSEESAPLDSAHTEKNKDNNKV.

The chain crosses the membrane as a helical span at residues 2–22; it reads GFGGISLWQLLIVLAIIVLLF. A disordered region spans residues 43 to 82; sequence KAMSDEKNTDKEKPEQIQKSEESAPLDSAHTEKNKDNNKV. 2 stretches are compositionally biased toward basic and acidic residues: residues 44-64 and 71-82; these read AMSDEKNTDKEKPEQIQKSEE and AHTEKNKDNNKV.

Belongs to the TatA/E family. The Tat system comprises two distinct complexes: a TatABC complex, containing multiple copies of TatA, TatB and TatC subunits, and a separate TatA complex, containing only TatA subunits. Substrates initially bind to the TatABC complex, which probably triggers association of the separate TatA complex to form the active translocon.

Its subcellular location is the cell inner membrane. Functionally, part of the twin-arginine translocation (Tat) system that transports large folded proteins containing a characteristic twin-arginine motif in their signal peptide across membranes. TatA could form the protein-conducting channel of the Tat system. This is Sec-independent protein translocase protein TatA from Pseudoalteromonas translucida (strain TAC 125).